We begin with the raw amino-acid sequence, 84 residues long: Hirudin-HM2 (84 aa).

Residues 1-20 (MFSLKLFVVFLAVCICVSQA) form the signal peptide. An interaction with thrombin active site region spans residues 21–23 (VSY). Intrachain disulfides connect C26-C34, C36-C48, and C42-C57. Residues 53-84 (SGNQCVHGEGTPKPKSQTEGDFEEIPDEDILN) are disordered. An O-linked (GalNAc...) threonine glycan is attached at T63. The span at 72 to 84 (GDFEEIPDEDILN) shows a compositional bias: acidic residues. The interaction with fibrinogen-binding exosite of thrombin stretch occupies residues 73-84 (DFEEIPDEDILN).

This sequence belongs to the protease inhibitor I14 (hirudin) family.

The protein resides in the secreted. Functionally, hirudin is a potent thrombin-specific protease inhibitor. It forms a stable non-covalent complex with alpha-thrombin, thereby abolishing its ability to cleave fibrinogen. This Hirudinaria manillensis (Asian medical leech) protein is Hirudin-HM2.